A 206-amino-acid polypeptide reads, in one-letter code: High frequency lysogenization protein HflD homolog (206 aa).

The protein belongs to the HflD family.

The protein resides in the cytoplasm. The protein localises to the cell inner membrane. The chain is High frequency lysogenization protein HflD homolog from Ectopseudomonas mendocina (strain ymp) (Pseudomonas mendocina).